Consider the following 637-residue polypeptide: Neurexin-3-beta (637 aa).

Positions 1-35 (MHLRIHARRSPPRRPAWTLGIWFLFWGCIVSSVWS) are cleaved as a signal peptide. Residues 36-562 (SSNVASSSST…EVIRESSSTT (527 aa)) are Extracellular-facing. Over residues 43–52 (SSTSSSPGSH) the composition is skewed to low complexity. The segment at 43-65 (SSTSSSPGSHSQHEHHFHGSKHH) is disordered. Residues 55–65 (HEHHFHGSKHH) are compositionally biased toward basic residues. In terms of domain architecture, Laminin G-like spans 85–255 (ATYIFGKSGG…NPNIKINGSV (171 aa)). Ca(2+) is bound by residues Asp-137 and Ile-154. An N-linked (GlcNAc...) asparagine glycan is attached at Asn-184. Ca(2+) is bound by residues Ile-206 and Asn-208. N-linked (GlcNAc...) asparagine glycans are attached at residues Asn-252 and Asn-296. The disordered stretch occupies residues 289–310 (ATTTTRKNRSTASIQPTSDDLV). Over residues 298-310 (STASIQPTSDDLV) the composition is skewed to polar residues. The O-linked (Xyl...) (heparan sulfate) serine glycan is linked to Ser-312. The chain crosses the membrane as a helical span at residues 563–583 (GMVVGIVAAAALCILILLYAM). At 584–637 (YKYRNRDEGSYQVDETRNYISNSAQSNGTLMKEKQQSSKSGHKKQKNKDREYYV) the chain is on the cytoplasmic side. The tract at residues 605 to 637 (NSAQSNGTLMKEKQQSSKSGHKKQKNKDREYYV) is disordered.

This sequence belongs to the neurexin family. In terms of assembly, weakly interacts with CBLN1 and CBLN2. Very weak binding, if any, to CBLN4. Specific isoforms bind neuroligins NLGN1, NLGN2 and NLGN3. Interacts with CLSTN3. Post-translationally, processed by alpha-secretase leading to the formation of an extracellular soluble protein as well as a C-terminal membrane-embedded fragment (CTF). Proteolysis of these CTFs by gamma-secretase releases intracellular domains (ICDs) and extracellular peptides. O-glycosylated; contains heparan sulfate. Heparan sulfate attachment is required for synapse development by mediating interactions with neuroligins. In terms of tissue distribution, expressed in the blood vessel walls (at protein level).

The protein resides in the presynaptic cell membrane. Neuronal cell surface protein that may be involved in cell recognition and cell adhesion. May mediate intracellular signaling. Functions as part of a trans-synaptic complex by binding to cerebellins and postsynaptic GRID1. This interaction helps regulate the activity of NMDA and AMPA receptors at hippocampal synapses without affecting synapse formation. NRXN3B-CBLN2-GRID1 complex transduce presynaptic signals into postsynaptic AMPAR response. The polypeptide is Neurexin-3-beta (Homo sapiens (Human)).